A 411-amino-acid polypeptide reads, in one-letter code: MGSCSPQLPLICLSDQTLKPGSSKWVKVRSDVRKALEDYGCFEAKIDQVSMELQGSVLKAMQELFALPTEAKQRNVCPKPFTGYLSHNGLSESFGIKDANILEKAHEFTQQLWPEGNKSISKMIQLYAEKLAELDMMVRRLILESYGIEYFIDEHLNSTYYRMRLMKYIARPDNDITAAVGANVDNGANDNADGDANVNDDGASIGVKVNVDVGDDVNDNDSVNIGVGVDINVETNVNGDLDAEANGDATAWVVGAVSGNASVGAKEANVDAELGLPSHTDKSLTGIIYQHQIDGLEVKTKEGKWIRVKPAPNTVIVIAGDALCALMNGRIPSPYHRVRVTEKKKTRYAAALFSNPKEGYIIDSPKELVDEKHPRAFKPFDFVDLFNFYHTEAGRRAPSTLQAFCGVSAGK.

The 98-residue stretch at 259-356 (GNASVGAKEA…RYAAALFSNP (98 aa)) folds into the Fe2OG dioxygenase domain. Fe cation is bound by residues histidine 279, aspartate 281, and histidine 336. Arginine 347 lines the 2-oxoglutarate pocket.

This sequence belongs to the iron/ascorbate-dependent oxidoreductase family. It depends on Fe(2+) as a cofactor. Not expressed.

Its function is as follows. 2-oxoglutarate-dependent dioxygenase involved in glucosinolates biosynthesis. Catalyzes the conversion of methylsulfinylalkyl glucosinolates to hydroxyalkyl glucosinolates. The polypeptide is 2-oxoglutarate-dependent dioxygenase AOP3 (AOP3) (Arabidopsis thaliana (Mouse-ear cress)).